A 275-amino-acid polypeptide reads, in one-letter code: Large ribosomal subunit protein uL2 (275 aa).

Residues 212-259 (RWKGIRPTNRGVTMNPVDHPHGGGEGKTSGGRHPVTPWGQPTRGYKTR) form a disordered region.

It belongs to the universal ribosomal protein uL2 family. Part of the 50S ribosomal subunit. Forms a bridge to the 30S subunit in the 70S ribosome.

One of the primary rRNA binding proteins. Required for association of the 30S and 50S subunits to form the 70S ribosome, for tRNA binding and peptide bond formation. It has been suggested to have peptidyltransferase activity; this is somewhat controversial. Makes several contacts with the 16S rRNA in the 70S ribosome. This Acidobacterium capsulatum (strain ATCC 51196 / DSM 11244 / BCRC 80197 / JCM 7670 / NBRC 15755 / NCIMB 13165 / 161) protein is Large ribosomal subunit protein uL2.